The chain runs to 315 residues: Outer membrane protease OmpP (315 aa).

A signal peptide spans 1-23; sequence MQTKLLAIMLAAPVVFSSQEASA. Catalysis depends on residues D103, D105, D230, and H232.

Belongs to the peptidase A26 family.

It is found in the cell outer membrane. Its function is as follows. Protease; also acts as a receptor for bacteriophage Ox2. In Escherichia coli (strain K12), this protein is Outer membrane protease OmpP (ompP).